The primary structure comprises 26 residues: Neprilysin (26 aa).

The protein belongs to the peptidase M13 family. Zn(2+) serves as cofactor.

The protein resides in the cell membrane. The enzyme catalyses Preferential cleavage of polypeptides between hydrophobic residues, particularly with Phe or Tyr at P1'.. It catalyses the reaction substance P + H2O = substance P(1-9) + L-Leu-L-Met-NH2. The catalysed reaction is substance P + H2O = substance P(1-7) + L-Phe-Gly-L-Leu-L-Met-NH2. It carries out the reaction neurotensin + H2O = neurotensin(1-11) + L-isoleucyl-L-leucine. The enzyme catalyses neurotensin + H2O = neurotensin(1-10) + L-tyrosyl-L-isoleucyl-L-leucine. Thermolysin-like specificity, but is almost confined on acting on polypeptides of up to 30 amino acids. Biologically important in the destruction of opioid peptides such as Met- and Leu-enkephalins by cleavage of a Gly-Phe bond. Catalyzes cleavage of bradykinin, substance P and neurotensin peptides. Able to cleave angiotensin-1, angiotensin-2 and angiotensin 1-9. Involved in the degradation of atrial natriuretic factor (ANF) and brain natriuretic factor (BNP(1-32)). Displays UV-inducible elastase activity toward skin preelastic and elastic fibers. This chain is Neprilysin (MME), found in Sus scrofa (Pig).